Reading from the N-terminus, the 139-residue chain is Large ribosomal subunit protein uL16 (139 aa).

Over residues Met1–Arg17 the composition is skewed to basic residues. A disordered region spans residues Met1–Gly24.

The protein belongs to the universal ribosomal protein uL16 family. As to quaternary structure, part of the 50S ribosomal subunit.

Functionally, binds 23S rRNA and is also seen to make contacts with the A and possibly P site tRNAs. In Clavibacter michiganensis subsp. michiganensis (strain NCPPB 382), this protein is Large ribosomal subunit protein uL16.